Here is a 512-residue protein sequence, read N- to C-terminus: GMP synthase [glutamine-hydrolyzing] (512 aa).

A Glutamine amidotransferase type-1 domain is found at 3 to 196 (NILILDFGSQ…VKHICQASET (194 aa)). The active-site Nucleophile is the Cys80. Catalysis depends on residues His169 and Glu171. A GMPS ATP-PPase domain is found at 197–387 (WKIETIEKQL…LGLPDVLISR (191 aa)). 225 to 231 (SGGVDSS) provides a ligand contact to ATP.

As to quaternary structure, homodimer.

It carries out the reaction XMP + L-glutamine + ATP + H2O = GMP + L-glutamate + AMP + diphosphate + 2 H(+). The protein operates within purine metabolism; GMP biosynthesis; GMP from XMP (L-Gln route): step 1/1. In terms of biological role, catalyzes the synthesis of GMP from XMP. This Chlamydia caviae (strain ATCC VR-813 / DSM 19441 / 03DC25 / GPIC) (Chlamydophila caviae) protein is GMP synthase [glutamine-hydrolyzing].